A 208-amino-acid polypeptide reads, in one-letter code: 3-demethoxyubiquinol 3-hydroxylase (208 aa).

Residues E57, E87, H90, E139, E171, and H174 each coordinate Fe cation.

Belongs to the COQ7 family. Fe cation is required as a cofactor.

The protein localises to the cell membrane. The enzyme catalyses a 5-methoxy-2-methyl-3-(all-trans-polyprenyl)benzene-1,4-diol + AH2 + O2 = a 3-demethylubiquinol + A + H2O. It participates in cofactor biosynthesis; ubiquinone biosynthesis. Catalyzes the hydroxylation of 2-nonaprenyl-3-methyl-6-methoxy-1,4-benzoquinol during ubiquinone biosynthesis. This Herbaspirillum seropedicae protein is 3-demethoxyubiquinol 3-hydroxylase.